A 326-amino-acid polypeptide reads, in one-letter code: Putative UPF0725 protein At1g28500 (326 aa).

Residues 301-320 (KDTEQRSKTRQSEEKVESSQ) show a composition bias toward basic and acidic residues. The disordered stretch occupies residues 301–326 (KDTEQRSKTRQSEEKVESSQKRSRLC).

Belongs to the UPF0725 (EMB2204) family.

This chain is Putative UPF0725 protein At1g28500, found in Arabidopsis thaliana (Mouse-ear cress).